Consider the following 407-residue polypeptide: Phenazine 1,6-dicarboxylic acid hydroxylase PhzS (407 aa).

The FAD site is built by G17, V134, and D313.

It depends on FAD as a cofactor.

It catalyses the reaction phenazine-1,6-dicarboxylate + NADH + O2 + 2 H(+) = 6-hydroxyphenazine-1-carboxylate + CO2 + NAD(+) + H2O. The enzyme catalyses 6-hydroxyphenazine-1-carboxylate + NADH + O2 + 2 H(+) = 1,6-dihydroxyphenazine + CO2 + NAD(+) + H2O. It carries out the reaction phenazine-1-carboxylate + NADH + O2 + 2 H(+) = 1-hydroxyphenazine + CO2 + NAD(+) + H2O. In terms of biological role, involved in the biosynthesis of phenazine natural products including myxin, an N(5),N(10)-dioxide phenazine antiobiotic, which has antimicrobial activity. Catalyzes the decarboxylative hydroxylations of phenazine 1,6-dicarboxylic acid (PDC) to produce 1,6-dihydroxyphenazine (DHP). Low activity with phenazine 1-carboxylic acid (PCA) to produce 1-hydroxyphenazine. In Lysobacter antibioticus, this protein is Phenazine 1,6-dicarboxylic acid hydroxylase PhzS.